The following is a 330-amino-acid chain: Aspartate--ammonia ligase (330 aa).

This sequence belongs to the class-II aminoacyl-tRNA synthetase family. AsnA subfamily.

Its subcellular location is the cytoplasm. The enzyme catalyses L-aspartate + NH4(+) + ATP = L-asparagine + AMP + diphosphate + H(+). It participates in amino-acid biosynthesis; L-asparagine biosynthesis; L-asparagine from L-aspartate (ammonia route): step 1/1. The sequence is that of Aspartate--ammonia ligase from Haemophilus influenzae (strain PittGG).